The following is a 427-amino-acid chain: Gamma-glutamyl phosphate reductase (427 aa).

The protein belongs to the gamma-glutamyl phosphate reductase family.

Its subcellular location is the cytoplasm. The catalysed reaction is L-glutamate 5-semialdehyde + phosphate + NADP(+) = L-glutamyl 5-phosphate + NADPH + H(+). It participates in amino-acid biosynthesis; L-proline biosynthesis; L-glutamate 5-semialdehyde from L-glutamate: step 2/2. In terms of biological role, catalyzes the NADPH-dependent reduction of L-glutamate 5-phosphate into L-glutamate 5-semialdehyde and phosphate. The product spontaneously undergoes cyclization to form 1-pyrroline-5-carboxylate. This is Gamma-glutamyl phosphate reductase from Brucella melitensis biotype 2 (strain ATCC 23457).